A 157-amino-acid polypeptide reads, in one-letter code: 2-C-methyl-D-erythritol 2,4-cyclodiphosphate synthase (157 aa).

Residues Asp8 and His10 each contribute to the a divalent metal cation site. 4-CDP-2-C-methyl-D-erythritol 2-phosphate-binding positions include 8–10 and 34–35; these read DVH and HS. His42 is a binding site for a divalent metal cation. Residues 56–58, 61–65, 100–106, 132–135, Phe139, and Arg142 contribute to the 4-CDP-2-C-methyl-D-erythritol 2-phosphate site; these read DIG, FPDTD, AQAPKML, and TTTE.

The protein belongs to the IspF family. As to quaternary structure, homotrimer. Requires a divalent metal cation as cofactor.

It catalyses the reaction 4-CDP-2-C-methyl-D-erythritol 2-phosphate = 2-C-methyl-D-erythritol 2,4-cyclic diphosphate + CMP. The protein operates within isoprenoid biosynthesis; isopentenyl diphosphate biosynthesis via DXP pathway; isopentenyl diphosphate from 1-deoxy-D-xylulose 5-phosphate: step 4/6. Functionally, involved in the biosynthesis of isopentenyl diphosphate (IPP) and dimethylallyl diphosphate (DMAPP), two major building blocks of isoprenoid compounds. Catalyzes the conversion of 4-diphosphocytidyl-2-C-methyl-D-erythritol 2-phosphate (CDP-ME2P) to 2-C-methyl-D-erythritol 2,4-cyclodiphosphate (ME-CPP) with a corresponding release of cytidine 5-monophosphate (CMP). This chain is 2-C-methyl-D-erythritol 2,4-cyclodiphosphate synthase, found in Erwinia tasmaniensis (strain DSM 17950 / CFBP 7177 / CIP 109463 / NCPPB 4357 / Et1/99).